Consider the following 361-residue polypeptide: Rho-GTPase-activating protein 5 (361 aa).

A Rho-GAP domain is found at 52–245 (IFLTRRDGEK…FLINHQGSFI (194 aa)). A compositionally biased stretch (low complexity) spans 306-323 (SSATYSNSPSSNFSNMKS). The disordered stretch occupies residues 306 to 345 (SSATYSNSPSSNFSNMKSSEVDPGSPPRIKSRSYSLSRSS).

Its subcellular location is the membrane. In terms of biological role, GTPase-activating protein for Rho1. Has a role in the negative regulation of (1-3)beta-D-glucan synthase activity and cell integrity. The protein is Rho-GTPase-activating protein 5 (rga5) of Schizosaccharomyces pombe (strain 972 / ATCC 24843) (Fission yeast).